We begin with the raw amino-acid sequence, 184 residues long: Photosystem I assembly protein Ycf4 (184 aa).

2 consecutive transmembrane segments (helical) span residues 19–39 and 57–77; these read LSNF…LLVG and FIFF…LFIS.

This sequence belongs to the Ycf4 family.

The protein localises to the plastid. The protein resides in the chloroplast thylakoid membrane. Seems to be required for the assembly of the photosystem I complex. The sequence is that of Photosystem I assembly protein Ycf4 from Jasminum nudiflorum (Winter jasmine).